Consider the following 94-residue polypeptide: MALLTDDQINAALAGLPGWTREGDSLRRAVTFDAFLDGIDAVRRIAEHAESVDHHPDIDIRWRTVTFVLSTHSEGGITDKDLALAETIDTQIGR.

Belongs to the pterin-4-alpha-carbinolamine dehydratase family.

The catalysed reaction is (4aS,6R)-4a-hydroxy-L-erythro-5,6,7,8-tetrahydrobiopterin = (6R)-L-erythro-6,7-dihydrobiopterin + H2O. The protein is Putative pterin-4-alpha-carbinolamine dehydratase of Mycobacteroides abscessus (strain ATCC 19977 / DSM 44196 / CCUG 20993 / CIP 104536 / JCM 13569 / NCTC 13031 / TMC 1543 / L948) (Mycobacterium abscessus).